We begin with the raw amino-acid sequence, 2511 residues long: Fatty acid synthase (2511 aa).

Residue Met-1 is modified to N-acetylmethionine. Positions 1 to 406 (MEEVVIAGMS…GSNVHIILRP (406 aa)) constitute a Ketosynthase family 3 (KS3) domain. Position 63 is a phosphoserine (Ser-63). Residue Lys-70 is modified to N6-acetyllysine. Residue Cys-161 is the For beta-ketoacyl synthase activity of the active site. Phosphoserine is present on Ser-207. Residue His-293 is the For beta-ketoacyl synthase activity of the active site. The residue at position 298 (Lys-298) is an N6-acetyllysine. His-331 acts as the For beta-ketoacyl synthase activity in catalysis. Positions 429–817 (RTPEAVQKLL…IDANPNALFP (389 aa)) are acyl and malonyl transferases. Lys-436 and Lys-528 each carry N6-acetyllysine. Ser-581 acts as the For malonyltransferase activity in catalysis. Residues 647–648 (DT) and Phe-671 contribute to the an acyl-CoA site. The residue at position 673 (Lys-673) is an N6-acetyllysine. Ser-725 bears the Phosphoserine mark. Residue Arg-773 participates in an acyl-CoA binding. Residues 838 to 966 (HSLAWDVPAA…KVYQWDDPDP (129 aa)) form an N-terminal hotdog fold region. The PKS/mFAS DH domain maps to 838–1108 (HSLAWDVPAA…TESAPRRQQE (271 aa)). Residue His-878 is the Proton acceptor; for dehydratase activity of the active site. The segment at 981–1108 (EPLFLAQAEV…TESAPRRQQE (128 aa)) is C-terminal hotdog fold. An N6-acetyllysine modification is found at Lys-992. Residue Asp-1031 is the Proton donor; for dehydratase activity of the active site. Residues Ser-1174 and Ser-1411 each carry the phosphoserine modification. Cys-1471 is modified (S-nitrosocysteine). 2 positions are modified to phosphoserine: Ser-1584 and Ser-1594. Positions 1635–1863 (DVPSNWTLEE…VQVLAEEPEA (229 aa)) are enoyl reductase. 1671–1688 (LLIHSGSGGVGQAAIAIA) is an NADP(+) binding site. Lys-1704 carries the N6-(pyridoxal phosphate)lysine; alternate modification. Lys-1704 is subject to N6-acetyllysine; alternate. An N6-acetyllysine mark is found at Lys-1771 and Lys-1847. Residues 1864–2118 (VLKGAKPKLM…FVLAEKAAAY (255 aa)) form a beta-ketoacyl reductase region. An NADP(+)-binding site is contributed by 1886-1901 (SYIIAGGLGGFGLELA). The residue at position 1995 (Lys-1995) is an N6-acetyllysine. Cys-2091 is modified (S-nitrosocysteine). The 78-residue stretch at 2121 to 2198 (RDSQRDLVEA…ELSSKADEAS (78 aa)) folds into the Carrier domain. Ser-2156 is modified (O-(pantetheine 4'-phosphoryl)serine; alternate). Ser-2156 bears the Phosphoserine; alternate mark. Ser-2198 carries the phosphoserine modification. Residues Thr-2204 and Thr-2215 each carry the phosphothreonine modification. Positions 2207–2511 (EDGLAQQQTQ…AEPRVSVREG (305 aa)) are thioesterase. Position 2236 is a phosphoserine (Ser-2236). Catalysis depends on Ser-2308, which acts as the For thioesterase activity. Residue Lys-2391 is modified to N6-acetyllysine. A Glycyl lysine isopeptide (Lys-Gly) (interchain with G-Cter in SUMO2) cross-link involves residue Lys-2449. Residue His-2481 is the For thioesterase activity of the active site.

As to quaternary structure, homodimer which is arranged in a head to tail fashion. Interacts with CEACAM1; this interaction is insulin and phosphorylation-dependent; reduces fatty-acid synthase activity. S-nitrosylation of Fatty acid synthase at cysteine residues Cys-1471 or Cys-2091 is important for the enzyme dimerization. In adipocytes, S-nitrosylation of Fatty acid synthase occurs under physiological conditions and gradually increases during adipogenesis. As to expression, ubiquitous. Prominent expression in brain, lung, liver and mammary gland.

The protein resides in the cytoplasm. Its subcellular location is the melanosome. It catalyses the reaction acetyl-CoA + n malonyl-CoA + 2n NADPH + 2n H(+) = a long-chain fatty acid + (n+1) CoA + n CO2 + 2n NADP(+).. The enzyme catalyses holo-[ACP] + acetyl-CoA = acetyl-[ACP] + CoA. The catalysed reaction is holo-[ACP] + malonyl-CoA = malonyl-[ACP] + CoA. It carries out the reaction a fatty acyl-[ACP] + malonyl-[ACP] + H(+) = a 3-oxoacyl-[ACP] + holo-[ACP] + CO2. It catalyses the reaction a (3R)-hydroxyacyl-[ACP] + NADP(+) = a 3-oxoacyl-[ACP] + NADPH + H(+). The enzyme catalyses a (3R)-hydroxyacyl-[ACP] = a (2E)-enoyl-[ACP] + H2O. The catalysed reaction is a 2,3-saturated acyl-[ACP] + NADP(+) = a (2E)-enoyl-[ACP] + NADPH + H(+). It carries out the reaction hexadecanoyl-[ACP] + H2O = hexadecanoate + holo-[ACP] + H(+). It catalyses the reaction acetyl-[ACP] + malonyl-[ACP] + H(+) = 3-oxobutanoyl-[ACP] + holo-[ACP] + CO2. The enzyme catalyses 3-oxobutanoyl-[ACP] + NADPH + H(+) = (3R)-hydroxybutanoyl-[ACP] + NADP(+). The catalysed reaction is (3R)-hydroxybutanoyl-[ACP] = (2E)-butenoyl-[ACP] + H2O. It carries out the reaction (2E)-butenoyl-[ACP] + NADPH + H(+) = butanoyl-[ACP] + NADP(+). It catalyses the reaction butanoyl-[ACP] + malonyl-[ACP] + H(+) = 3-oxohexanoyl-[ACP] + holo-[ACP] + CO2. The enzyme catalyses 3-oxohexanoyl-[ACP] + NADPH + H(+) = (3R)-hydroxyhexanoyl-[ACP] + NADP(+). The catalysed reaction is (3R)-hydroxyhexanoyl-[ACP] = (2E)-hexenoyl-[ACP] + H2O. It carries out the reaction (2E)-hexenoyl-[ACP] + NADPH + H(+) = hexanoyl-[ACP] + NADP(+). It catalyses the reaction hexanoyl-[ACP] + malonyl-[ACP] + H(+) = 3-oxooctanoyl-[ACP] + holo-[ACP] + CO2. The enzyme catalyses 3-oxooctanoyl-[ACP] + NADPH + H(+) = (3R)-hydroxyoctanoyl-[ACP] + NADP(+). The catalysed reaction is (3R)-hydroxyoctanoyl-[ACP] = (2E)-octenoyl-[ACP] + H2O. It carries out the reaction (2E)-octenoyl-[ACP] + NADPH + H(+) = octanoyl-[ACP] + NADP(+). It catalyses the reaction octanoyl-[ACP] + malonyl-[ACP] + H(+) = 3-oxodecanoyl-[ACP] + holo-[ACP] + CO2. The enzyme catalyses 3-oxodecanoyl-[ACP] + NADPH + H(+) = (3R)-hydroxydecanoyl-[ACP] + NADP(+). The catalysed reaction is (3R)-hydroxydecanoyl-[ACP] = (2E)-decenoyl-[ACP] + H2O. It carries out the reaction (2E)-decenoyl-[ACP] + NADPH + H(+) = decanoyl-[ACP] + NADP(+). It catalyses the reaction decanoyl-[ACP] + malonyl-[ACP] + H(+) = 3-oxododecanoyl-[ACP] + holo-[ACP] + CO2. The enzyme catalyses 3-oxododecanoyl-[ACP] + NADPH + H(+) = (3R)-hydroxydodecanoyl-[ACP] + NADP(+). The catalysed reaction is (3R)-hydroxydodecanoyl-[ACP] = (2E)-dodecenoyl-[ACP] + H2O. It carries out the reaction (2E)-dodecenoyl-[ACP] + NADPH + H(+) = dodecanoyl-[ACP] + NADP(+). It catalyses the reaction dodecanoyl-[ACP] + malonyl-[ACP] + H(+) = 3-oxotetradecanoyl-[ACP] + holo-[ACP] + CO2. The enzyme catalyses 3-oxotetradecanoyl-[ACP] + NADPH + H(+) = (3R)-hydroxytetradecanoyl-[ACP] + NADP(+). The catalysed reaction is (3R)-hydroxytetradecanoyl-[ACP] = (2E)-tetradecenoyl-[ACP] + H2O. It carries out the reaction (2E)-tetradecenoyl-[ACP] + NADPH + H(+) = tetradecanoyl-[ACP] + NADP(+). It catalyses the reaction tetradecanoyl-[ACP] + malonyl-[ACP] + H(+) = 3-oxohexadecanoyl-[ACP] + holo-[ACP] + CO2. The enzyme catalyses 3-oxohexadecanoyl-[ACP] + NADPH + H(+) = (3R)-hydroxyhexadecanoyl-[ACP] + NADP(+). The catalysed reaction is (3R)-hydroxyhexadecanoyl-[ACP] = (2E)-hexadecenoyl-[ACP] + H2O. It carries out the reaction (2E)-hexadecenoyl-[ACP] + NADPH + H(+) = hexadecanoyl-[ACP] + NADP(+). It catalyses the reaction hexadecanoyl-[ACP] + malonyl-[ACP] + H(+) = 3-oxooctadecanoyl-[ACP] + holo-[ACP] + CO2. The enzyme catalyses 3-oxooctadecanoyl-[ACP] + NADPH + H(+) = (3R)-hydroxyoctadecanoyl-[ACP] + NADP(+). The catalysed reaction is (3R)-hydroxyoctadecanoyl-[ACP] = (2E)-octadecenoyl-[ACP] + H2O. It carries out the reaction (2E)-octadecenoyl-[ACP] + NADPH + H(+) = octadecanoyl-[ACP] + NADP(+). It catalyses the reaction tetradecanoyl-[ACP] + H2O = tetradecanoate + holo-[ACP] + H(+). The enzyme catalyses octadecanoyl-[ACP] + H2O = octadecanoate + holo-[ACP] + H(+). It functions in the pathway lipid metabolism; fatty acid biosynthesis. With respect to regulation, activated by S-nitrosylation which promotes enzyme dimerization. Cerulenin, a potent non-competitive pharmacological inhibitor of FAS, binds covalently to the active site of the condensing enzyme region, inactivating a key enzyme step in fatty acid synthesis. Fatty acid synthetase is a multifunctional enzyme that catalyzes the de novo biosynthesis of long-chain saturated fatty acids starting from acetyl-CoA and malonyl-CoA in the presence of NADPH. This multifunctional protein contains 7 catalytic activities and a site for the binding of the prosthetic group 4'-phosphopantetheine of the acyl carrier protein ([ACP]) domain. In terms of biological role, (Microbial infection) Fatty acid synthetase activity is required for SARS coronavirus-2/SARS-CoV-2 replication. The sequence is that of Fatty acid synthase (FASN) from Homo sapiens (Human).